Reading from the N-terminus, the 152-residue chain is Anaerobic nitrite reductase HBI (152 aa).

The 150-residue stretch at 2 to 151 (ALTEKQEALL…LVATIKAEMK (150 aa)) folds into the Globin domain. The Homodimerization motif lies at 35–39 (EAAPE). Ser45, Lys59, His63, Arg93, and His98 together coordinate heme b. The Homodimerization motif lies at 105–117 (DPHFEVMKGALLG).

Belongs to the plant globin family. As to quaternary structure, homodimer. The cofactor is heme b. As to expression, root nodules.

It localises to the cytoplasm. Its subcellular location is the nucleus. The catalysed reaction is Fe(III)-heme b-[protein] + nitric oxide + H2O = Fe(II)-heme b-[protein] + nitrite + 2 H(+). Phytoglobin that reduces nitrite to nitric oxide (NO) under anoxic conditions (e.g. during flooding or in waterlogged soil) and upon root nodulation. Required for general plant development and during nodulation, especially for the onset of symbiosis. Monitors nitric oxide (NO) levels during early phase of the nitrogen-fixing symbiosis and buffers oxygen in functioning nodules. May not function as an oxygen storage or transport protein. Has an unusually high affinity for O(2) through a hexacoordinate heme iron because of a very low dissociation constant. This chain is Anaerobic nitrite reductase HBI, found in Casuarina glauca (Swamp oak).